A 427-amino-acid chain; its full sequence is MTVSFEKTSDTKGTLSFSIDQETIKTGLDKAFNKVKANISVPGFRKGKISRQMFNKMYGEEALFEEALNAVLPTAYDAAVKEAGIEPVAQPKIDVAKMEKGSDWELTAEVVVKPTVSLGDYKDLTVEVEATKEVSDEEVETRLTNSQNNLAELVVKETAAENGDTVVIDFVGSVDGVEFEGGKGSNHSLELGSGQFIPGFEEQLVGTKAGETVEVKVTFPENYQAEDLAGKEALFVTTVNEVKAKELPELDDELAKDIDEEVETLDELKAKFRKELEESKAEAYNDAVETAAIEAAVANAEIKEIPEEMIHEEVHRAMNEFLGGMQQQGISPEMYFQITGTSEDDLHKQYEADADKRVRTNLVIEAIAAAENFTTSDEEVKAEIEDLAGQYNMPVEQVEKLLPVDMLKHDIAMKKAVEVIATTAKVK.

One can recognise a PPIase FKBP-type domain in the interval 163–248; the sequence is GDTVVIDFVG…VNEVKAKELP (86 aa).

The protein belongs to the FKBP-type PPIase family. Tig subfamily.

It is found in the cytoplasm. It carries out the reaction [protein]-peptidylproline (omega=180) = [protein]-peptidylproline (omega=0). Involved in protein export. Acts as a chaperone by maintaining the newly synthesized protein in an open conformation. Functions as a peptidyl-prolyl cis-trans isomerase. The sequence is that of Trigger factor (tig) from Lactococcus lactis subsp. lactis (strain IL1403) (Streptococcus lactis).